The sequence spans 300 residues: 4-hydroxy-tetrahydrodipicolinate synthase (300 aa).

T56 contacts pyruvate. The active-site Proton donor/acceptor is Y145. Catalysis depends on K173, which acts as the Schiff-base intermediate with substrate. A pyruvate-binding site is contributed by V215.

Belongs to the DapA family. As to quaternary structure, homotetramer; dimer of dimers.

It localises to the cytoplasm. The enzyme catalyses L-aspartate 4-semialdehyde + pyruvate = (2S,4S)-4-hydroxy-2,3,4,5-tetrahydrodipicolinate + H2O + H(+). The protein operates within amino-acid biosynthesis; L-lysine biosynthesis via DAP pathway; (S)-tetrahydrodipicolinate from L-aspartate: step 3/4. Catalyzes the condensation of (S)-aspartate-beta-semialdehyde [(S)-ASA] and pyruvate to 4-hydroxy-tetrahydrodipicolinate (HTPA). This Prochlorococcus marinus (strain AS9601) protein is 4-hydroxy-tetrahydrodipicolinate synthase.